A 126-amino-acid chain; its full sequence is UPF0102 protein PMT_0624 (126 aa).

The protein belongs to the UPF0102 family.

The chain is UPF0102 protein PMT_0624 from Prochlorococcus marinus (strain MIT 9313).